The primary structure comprises 372 residues: 4-hydroxy-3-methylbut-2-en-1-yl diphosphate synthase (flavodoxin) (372 aa).

[4Fe-4S] cluster is bound by residues Cys270, Cys273, Cys305, and Glu312.

The protein belongs to the IspG family. [4Fe-4S] cluster serves as cofactor.

The enzyme catalyses (2E)-4-hydroxy-3-methylbut-2-enyl diphosphate + oxidized [flavodoxin] + H2O + 2 H(+) = 2-C-methyl-D-erythritol 2,4-cyclic diphosphate + reduced [flavodoxin]. Its pathway is isoprenoid biosynthesis; isopentenyl diphosphate biosynthesis via DXP pathway; isopentenyl diphosphate from 1-deoxy-D-xylulose 5-phosphate: step 5/6. In terms of biological role, converts 2C-methyl-D-erythritol 2,4-cyclodiphosphate (ME-2,4cPP) into 1-hydroxy-2-methyl-2-(E)-butenyl 4-diphosphate. This chain is 4-hydroxy-3-methylbut-2-en-1-yl diphosphate synthase (flavodoxin), found in Marinobacter nauticus (strain ATCC 700491 / DSM 11845 / VT8) (Marinobacter aquaeolei).